Consider the following 395-residue polypeptide: Terminal nucleotidyltransferase 5B (395 aa).

This sequence belongs to the TENT family.

It is found in the cytoplasm. Its subcellular location is the nucleus. The enzyme catalyses RNA(n) + ATP = RNA(n)-3'-adenine ribonucleotide + diphosphate. In terms of biological role, catalyzes the transfer of one adenosine molecule from an ATP to an mRNA poly(A) tail bearing a 3'-OH terminal group in an ATP hydrolysis-dependent manner and participates in cytoplasmic polyadenylation. May be involved in maintaining the translation efficiency of at least some genes through preventing degradation of their mRNAs. The protein is Terminal nucleotidyltransferase 5B of Xenopus tropicalis (Western clawed frog).